The primary structure comprises 322 residues: Eukaryotic translation initiation factor 3 subunit I (322 aa).

5 WD repeats span residues 4–43, 46–85, 141–180, 184–223, and 281–322; these read GHER…RLGT, GHQG…VIAS, MTES…KVVD, DHTG…CLKT, and GHFG…NIFE.

Belongs to the eIF-3 subunit I family. Component of the eukaryotic translation initiation factor 3 (eIF-3) complex. The eIF-3 complex interacts with pix.

Its subcellular location is the cytoplasm. Functionally, component of the eukaryotic translation initiation factor 3 (eIF-3) complex, which is involved in protein synthesis of a specialized repertoire of mRNAs and, together with other initiation factors, stimulates binding of mRNA and methionyl-tRNAi to the 40S ribosome. The eIF-3 complex specifically targets and initiates translation of a subset of mRNAs involved in cell proliferation. This chain is Eukaryotic translation initiation factor 3 subunit I, found in Drosophila willistoni (Fruit fly).